Consider the following 927-residue polypeptide: MSEPTFKMTPMFEHYMSIKADYPDALLFYRMGDFYELFFDDAELAARELQITLTSRSRDPNNPIPMCGVPWHAVDTYVAQLVDKGYHIAICDQVEDPKTSKGLVKRAVTSVKTPGTVLDDANLSTKSHNYLGALCPGSDAEKGGFAWLDVSTGQWSGVDFRRQTELWQWVLKMAPRELLVPEGFQPPARTLLEGIRLVRLPLSRFDLKRSTERVLAAQGVREAAALGLEGREEIMRACGALLAYLAQTQMRSPEHLQPFLRLDLSRRLIIDEVTERNLEIFTRLNGRKGKGTLRHVLDETMTPMGGRLLEDMLRHPWREISPIVRIQDAVEWFYVDDGRRTALREALNGVYDMERLSTRISLNQGSPRDFIALRNSLAALPQVFTALIEPTTSLLLRPDQEKDASENTSQENGLTQPRALTELLKTWDAMEDCAQLLQSALVDNPPPVITDGGLFKSGYNAELDRLLDLAEHGEQKLQAMLAEEQSTTGIAKLKLGYNRVFGYYFEVSRAAHSGTVPYHFIRRQSLANAERFTTEALKNLEEELLSASDKRKALEYTLFQDLRQHMADQRERIAHMAQLIAHLDYWQSLAQVGRLNNWCRPGLETDGNLTIREGRHPVVEAMIGRANFVPNDFRLDEKRRLCLLTGPNMAGKSTVLRQVAIICLLAQMGSMVPATSARLGLVDRLFSRVGASDNLAQGQSTFMVEMMETARILRQATKRSLIILDEIGRGTSTYDGVALAWAMVEDLSRRAQGELRTLFATHYHELTALEGRVDGVFTMNIAISEYSGDILFLHKLVPGPADRSYGVEVARLAGVPGPVVQRARAILANLERGRDVARKAVVSAVCLPGIDLPETGPEEDMPVLQAAPPRSEHPVIELLRQIEPEELSPLDALKTLMEWKKLWSAQPGSAEQGESPDKHDEGKNSRG.

646–653 (GPNMAGKS) serves as a coordination point for ATP. The tract at residues 904–927 (SAQPGSAEQGESPDKHDEGKNSRG) is disordered. Over residues 915 to 927 (SPDKHDEGKNSRG) the composition is skewed to basic and acidic residues.

This sequence belongs to the DNA mismatch repair MutS family.

In terms of biological role, this protein is involved in the repair of mismatches in DNA. It is possible that it carries out the mismatch recognition step. This protein has a weak ATPase activity. This Desulfovibrio desulfuricans (strain ATCC 27774 / DSM 6949 / MB) protein is DNA mismatch repair protein MutS.